Consider the following 284-residue polypeptide: Large ribosomal subunit protein uL2 (284 aa).

Disordered regions lie at residues 28 to 50 (ELEGSSSKRSVRPNKKLSFFKKS) and 232 to 284 (RGTA…DRRK). Positions 36-46 (RSVRPNKKLSF) are enriched in basic residues. A compositionally biased stretch (basic and acidic residues) spans 240-250 (DHPHGGGEGRH). The segment covering 264–284 (KGLKTRDKRKSNKWIVKDRRK) has biased composition (basic residues).

It belongs to the universal ribosomal protein uL2 family. Part of the 50S ribosomal subunit. Forms a bridge to the 30S subunit in the 70S ribosome.

Its function is as follows. One of the primary rRNA binding proteins. Required for association of the 30S and 50S subunits to form the 70S ribosome, for tRNA binding and peptide bond formation. It has been suggested to have peptidyltransferase activity; this is somewhat controversial. Makes several contacts with the 16S rRNA in the 70S ribosome. The polypeptide is Large ribosomal subunit protein uL2 (Chlamydia muridarum (strain MoPn / Nigg)).